A 360-amino-acid chain; its full sequence is UDP-N-acetylglucosamine--N-acetylmuramyl-(pentapeptide) pyrophosphoryl-undecaprenol N-acetylglucosamine transferase (360 aa).

Residues 12-14 (TAG), Ser-198, and Gln-289 contribute to the UDP-N-acetyl-alpha-D-glucosamine site.

It belongs to the glycosyltransferase 28 family. MurG subfamily.

The protein resides in the cell membrane. It catalyses the reaction Mur2Ac(oyl-L-Ala-gamma-D-Glu-L-Lys-D-Ala-D-Ala)-di-trans,octa-cis-undecaprenyl diphosphate + UDP-N-acetyl-alpha-D-glucosamine = beta-D-GlcNAc-(1-&gt;4)-Mur2Ac(oyl-L-Ala-gamma-D-Glu-L-Lys-D-Ala-D-Ala)-di-trans,octa-cis-undecaprenyl diphosphate + UDP + H(+). It participates in cell wall biogenesis; peptidoglycan biosynthesis. Its function is as follows. Cell wall formation. Catalyzes the transfer of a GlcNAc subunit on undecaprenyl-pyrophosphoryl-MurNAc-pentapeptide (lipid intermediate I) to form undecaprenyl-pyrophosphoryl-MurNAc-(pentapeptide)GlcNAc (lipid intermediate II). This Streptococcus equi subsp. equi (strain 4047) protein is UDP-N-acetylglucosamine--N-acetylmuramyl-(pentapeptide) pyrophosphoryl-undecaprenol N-acetylglucosamine transferase.